The following is a 114-amino-acid chain: Ribonuclease P protein component (114 aa).

The protein belongs to the RnpA family. In terms of assembly, consists of a catalytic RNA component (M1 or rnpB) and a protein subunit.

The catalysed reaction is Endonucleolytic cleavage of RNA, removing 5'-extranucleotides from tRNA precursor.. Its function is as follows. RNaseP catalyzes the removal of the 5'-leader sequence from pre-tRNA to produce the mature 5'-terminus. It can also cleave other RNA substrates such as 4.5S RNA. The protein component plays an auxiliary but essential role in vivo by binding to the 5'-leader sequence and broadening the substrate specificity of the ribozyme. This is Ribonuclease P protein component from Legionella pneumophila (strain Lens).